The chain runs to 284 residues: Kynurenine formamidase avaC (284 aa).

The HGGXW motif lies at 47 to 51 (HGGGW). Residue S130 is the Nucleophile of the active site.

It belongs to the kynurenine formamidase family.

The catalysed reaction is N-formyl-L-kynurenine + H2O = L-kynurenine + formate + H(+). It functions in the pathway secondary metabolite metabolism. Functionally, kynurenine formamidase; part of the cluster that mediates the biosynthesis of a highly modified cyclo-arginine-tryptophan dipeptide (cRW). Within the pathway, avaC catalyzes the deformylation of the cyclo-Arg-formylkynurenine iketopiperazine (DKP), produced by the FAD-dependent monooxygenase avaB. The first step of the pathway is perfornmed by the arginine-containing cyclodipeptide synthase (RCPDS) avaA that acts as the scaffold-generating enzyme and is responsible for formation of the cyclo-Arg-Trp (cRW) diketopiperazine. AvaB then acts as a multifunctional flavoenzyme that is responsible for generating the cyclo-Arg-formylkynurenine DKP, which can be deformylated by avaC. AvaB then further catalyzes an additional N-oxidation followed by cyclization and dehydration. The next step is an N-acetylation of the guanidine group catalyzed by the arginine N-acetyltransferase avaD. The roles of the additional enzymes identified within the ava cluster still have to be determined. The sequence is that of Kynurenine formamidase avaC from Aspergillus versicolor.